Consider the following 238-residue polypeptide: Ribonuclease 3 (238 aa).

Residues 4–130 (IQTLFQTLNI…LFGAIYLDLG (127 aa)) form the RNase III domain. Glutamate 45 is a binding site for Mg(2+). Aspartate 49 is a catalytic residue. Mg(2+)-binding residues include aspartate 116 and glutamate 119. Residue glutamate 119 is part of the active site. Residues 154-222 (DFKTQLQEIV…AQQALSKVAK (69 aa)) enclose the DRBM domain. Residues 215–238 (QALSKVAKPKDLLNNKGGKEKELQ) are disordered. Residues 222-238 (KPKDLLNNKGGKEKELQ) show a composition bias toward basic and acidic residues.

It belongs to the ribonuclease III family. As to quaternary structure, homodimer. Mg(2+) serves as cofactor.

The protein resides in the cytoplasm. The enzyme catalyses Endonucleolytic cleavage to 5'-phosphomonoester.. Functionally, digests double-stranded RNA. Involved in the processing of primary rRNA transcript to yield the immediate precursors to the large and small rRNAs (23S and 16S). Processes some mRNAs, and tRNAs when they are encoded in the rRNA operon. Processes pre-crRNA and tracrRNA of type II CRISPR loci if present in the organism. The polypeptide is Ribonuclease 3 (Onion yellows phytoplasma (strain OY-M)).